A 519-amino-acid polypeptide reads, in one-letter code: Galactan beta-1,4-galactosyltransferase GALS2 (519 aa).

The chain crosses the membrane as a helical span at residues 28 to 48 (LALMALLVLCTLATLLPFLPS). In terms of domain architecture, GT92 spans 257–471 (DYLYCGSSLY…YHGSISQRRE (215 aa)).

This sequence belongs to the glycosyltransferase 92 family. As to expression, expressed in the midrib of mature leaves, root vasculature, flower filaments, siliques and seeds.

It localises to the golgi apparatus membrane. Its function is as follows. Involved in the biosynthesis of beta-1,4-galactan. Beta-1,4-galactans are abundant polysaccharides in plant cell walls and are found as side-chain of rhamnogalacturonan I, which is a major component of pectin. This Arabidopsis thaliana (Mouse-ear cress) protein is Galactan beta-1,4-galactosyltransferase GALS2.